Consider the following 395-residue polypeptide: ETS-related transcription factor Elf-3 (395 aa).

The region spanning 69-155 is the PNT domain; that stretch reads EPPAVLHLAE…AQLRDLTSSS (87 aa). Residues 200–240 are compositionally biased toward low complexity; it reads ASPYYGSSYGPGAPSPGSSDFSTSGTDTPQSSHSSDSGGSD. Residues 200 to 275 form a disordered region; it reads ASPYYGSSYG…HGKRKRGRPR (76 aa). Residues 246 to 265 show a composition bias toward basic and acidic residues; that stretch reads TDSKVFPRDGFPDYKKGEPK. Residues 266–275 are compositionally biased toward basic residues; sequence HGKRKRGRPR. The segment at residues 297–379 is a DNA-binding region (ETS); sequence THLWEFIRDI…DGRRLVYKFG (83 aa).

It belongs to the ETS family. Interacts with TBP. Interacts with CREBBP and EP300; these act as transcriptional coactivators of ELF3 and positively modulate its function. Interacts with XRCC5/KU86 and XRCC6/KU70; these inhibit the ability of ELF3 to bind DNA and negatively modulate its transcriptional activity. Associated with CLND7 and POU2F3. Interacts with ZNF768.

It is found in the cytoplasm. The protein localises to the nucleus. Transcriptional activator that binds and transactivates ETS sequences containing the consensus nucleotide core sequence GGA[AT]. Acts synergistically with POU2F3 to transactivate the SPRR2A promoter and with RUNX1 to transactivate the ANGPT1 promoter. Also transactivates collagenase, CCL20, CLND7, FLG, KRT8, NOS2, PTGS2, SPRR2B, TGFBR2 and TGM3 promoters. Represses KRT4 promoter activity. Involved in mediating vascular inflammation. May play an important role in epithelial cell differentiation and tumorigenesis. May be a critical downstream effector of the ERBB2 signaling pathway. May be associated with mammary gland development and involution. Plays an important role in the regulation of transcription with TATA-less promoters in preimplantation embryos, which is essential in preimplantation development. In Rattus norvegicus (Rat), this protein is ETS-related transcription factor Elf-3.